Here is a 348-residue protein sequence, read N- to C-terminus: Phenylalanine--tRNA ligase alpha subunit (348 aa).

Residue Glu268 coordinates Mg(2+).

It belongs to the class-II aminoacyl-tRNA synthetase family. Phe-tRNA synthetase alpha subunit type 1 subfamily. Tetramer of two alpha and two beta subunits. Requires Mg(2+) as cofactor.

The protein resides in the cytoplasm. It catalyses the reaction tRNA(Phe) + L-phenylalanine + ATP = L-phenylalanyl-tRNA(Phe) + AMP + diphosphate + H(+). In Bordetella bronchiseptica (strain ATCC BAA-588 / NCTC 13252 / RB50) (Alcaligenes bronchisepticus), this protein is Phenylalanine--tRNA ligase alpha subunit.